A 532-amino-acid chain; its full sequence is Cytochrome P450 714B2 (532 aa).

The Lumenal segment spans residues 1–2 (ME). Residues 3 to 23 (VGMVVVVAAKVLVSLWCVGAC) traverse the membrane as a helical; Signal-anchor for type III membrane protein segment. Topologically, residues 24–532 (CLAAYLYRVV…LTRVQGAYRH (509 aa)) are cytoplasmic. C474 is a heme binding site.

The protein belongs to the cytochrome P450 family. Heme serves as cofactor. Highly expressed in shoot, spikelet and uppermost internode. Detected in roots, leaves and anthers.

Its subcellular location is the membrane. Its function is as follows. Catalyzes the 13-hydroxylation of gibberellins (GAs). Determines the ratio of GA4 and GA1. Converts GA12 into GA53. This is Cytochrome P450 714B2 (CYP714B2) from Oryza sativa subsp. japonica (Rice).